Consider the following 139-residue polypeptide: GSK3-beta interaction protein (139 aa).

Positions Met1–Leu22 are disordered. A required for PRKAR2A interaction; contributes to a protective effect against H(2)O(2)-induced apoptosis region spans residues Val41–Leu45. Residues Ser115–Ser139 form an interaction with GSK3B and acts as a GSK3B inhibitor region.

It belongs to the GSKIP family. As to quaternary structure, forms a complex composed of PRKAR2A or PRKAR2B, GSK3B and GSKIP through GSKIP interaction; facilitates PKA-induced phosphorylation of GSK3B leading to GSK3B inactivation; recruits DNM1L through GSK3B for PKA-mediated phosphorylation of DNM1L; promotes beta-catenin degradation through GSK3B-induced phosphorylation of beta-catenin; stabilizes beta-catenin and enhances Wnt-induced signaling through PKA-induced phosphorylation of beta-catenin. Interacts with GSK3B; induces GSK3B-mediated phosphorylation of GSKIP and inhibits GSK3B kinase activity. Post-translationally, phosphorylated by GSK3B.

The protein resides in the cytoplasm. It is found in the nucleus. A-kinase anchoring protein for GSK3B and PKA that regulates or facilitates their kinase activity towards their targets. The ternary complex enhances Wnt-induced signaling by facilitating the GSK3B- and PKA-induced phosphorylation of beta-catenin leading to beta-catenin degradation and stabilization respectively. Upon cAMP activation, the ternary complex contributes to neuroprotection against oxidative stress-induced apoptosis by facilitating the PKA-induced phosphorylation of DML1 and PKA-induced inactivation of GSK3B. During neurite outgrowth promotes neuron proliferation; while increases beta-catenin-induced transcriptional activity through GSK3B kinase activity inhibition, reduces N-cadherin level to promote cell cycle progression. May play a role in cleft palate formation and is required for postnatal life through modulation of the activity of GSK3B during development. The protein is GSK3-beta interaction protein of Macaca fascicularis (Crab-eating macaque).